A 665-amino-acid chain; its full sequence is Transketolase (665 aa).

His26 lines the substrate pocket. Thiamine diphosphate is bound by residues His66 and 114 to 116 (GPL). Positions 94–114 (NSKTPGHPETGETPGVETTTG) are disordered. Over residues 97-114 (TPGHPETGETPGVETTTG) the composition is skewed to low complexity. Asp155 is a binding site for Mg(2+). Thiamine diphosphate contacts are provided by Gly156 and Asn185. Mg(2+) is bound by residues Asn185 and Ile187. Substrate-binding residues include His261, Arg358, and Ser385. His261 contacts thiamine diphosphate. The active-site Proton donor is Glu411. Thiamine diphosphate is bound at residue Phe437. His461, Asp469, and Arg520 together coordinate substrate.

Belongs to the transketolase family. As to quaternary structure, homodimer. Mg(2+) serves as cofactor. The cofactor is Ca(2+). Mn(2+) is required as a cofactor. Requires Co(2+) as cofactor. It depends on thiamine diphosphate as a cofactor.

The enzyme catalyses D-sedoheptulose 7-phosphate + D-glyceraldehyde 3-phosphate = aldehydo-D-ribose 5-phosphate + D-xylulose 5-phosphate. Functionally, catalyzes the transfer of a two-carbon ketol group from a ketose donor to an aldose acceptor, via a covalent intermediate with the cofactor thiamine pyrophosphate. The chain is Transketolase (tkt) from Buchnera aphidicola subsp. Acyrthosiphon pisum (strain APS) (Acyrthosiphon pisum symbiotic bacterium).